The following is a 176-amino-acid chain: Skp1-related protein (176 aa).

This sequence belongs to the SKP1 family. As to quaternary structure, probable component of the SCF(sel-10) E3 ubiquitin-protein ligase complex containing F-box domain-containing protein sel-10 as the substrate recognition component. Interacts with cul-1. May interact with the F-box protein mec-15. Interacts with dre-1. Interacts with syg-1. Interacts with sel-10. As to expression, ubiquitously expressed in the adult.

Functionally, probable essential component of SCF (SKP1-CUL1-F-box protein) E3 ubiquitin-protein ligase complexes, which mediate the ubiquitination and subsequent proteasomal degradation of target proteins. Regulates cell proliferation during embryonic and larval development. Involved in synapse elimination in early synapse development. May negatively regulate the apoptotic activity of cep-1 in response to genotoxic stress. Plays a role in sex determination. The protein is Skp1-related protein of Caenorhabditis elegans.